The following is a 523-amino-acid chain: GMP synthase [glutamine-hydrolyzing] (523 aa).

One can recognise a Glutamine amidotransferase type-1 domain in the interval lysine 8 to asparagine 205. The Nucleophile role is filled by cysteine 85. Residues histidine 179 and glutamate 181 contribute to the active site. Positions tryptophan 206 to arginine 398 constitute a GMPS ATP-PPase domain. An ATP-binding site is contributed by serine 233–serine 239.

As to quaternary structure, homodimer.

The enzyme catalyses XMP + L-glutamine + ATP + H2O = GMP + L-glutamate + AMP + diphosphate + 2 H(+). Its pathway is purine metabolism; GMP biosynthesis; GMP from XMP (L-Gln route): step 1/1. Its function is as follows. Catalyzes the synthesis of GMP from XMP. The protein is GMP synthase [glutamine-hydrolyzing] of Actinobacillus succinogenes (strain ATCC 55618 / DSM 22257 / CCUG 43843 / 130Z).